The chain runs to 290 residues: uncharacterized protein (290 aa).

Disordered regions lie at residues 105-156 and 259-290; these read LKHK…KLTV and EGAQ…KSKK. Over residues 114–130 the composition is skewed to polar residues; the sequence is KATQQARKRNFISSKSK. Basic and acidic residues-rich tracts occupy residues 143 to 156 and 261 to 280; these read RESK…KLTV and AQRD…EPVL.

This is an uncharacterized protein from Homo sapiens (Human).